The sequence spans 315 residues: DNA-directed RNA polymerase subunit alpha (315 aa).

Residues 1–228 (MIEIEKPKIE…EHLNLFIDLS (228 aa)) form an alpha N-terminal domain (alpha-NTD) region. The tract at residues 245 to 315 (KEKVLEMTIE…LGLSLAPSED (71 aa)) is alpha C-terminal domain (alpha-CTD).

Belongs to the RNA polymerase alpha chain family. In terms of assembly, homodimer. The RNAP catalytic core consists of 2 alpha, 1 beta, 1 beta' and 1 omega subunit. When a sigma factor is associated with the core the holoenzyme is formed, which can initiate transcription.

It carries out the reaction RNA(n) + a ribonucleoside 5'-triphosphate = RNA(n+1) + diphosphate. In terms of biological role, DNA-dependent RNA polymerase catalyzes the transcription of DNA into RNA using the four ribonucleoside triphosphates as substrates. This Acetivibrio thermocellus (strain ATCC 27405 / DSM 1237 / JCM 9322 / NBRC 103400 / NCIMB 10682 / NRRL B-4536 / VPI 7372) (Clostridium thermocellum) protein is DNA-directed RNA polymerase subunit alpha.